The primary structure comprises 230 residues: MSALAGLVDKGLMAPDWAQALAPVDEQIAAMGRFLREELAAGRTYQPTGEWVFRAFQRPLADVRVLIVGQDPYPNPEHPIGLSFAVRGDVWPLPPSLVNIYTELRDDLGLMPPRHGDLTAWADQGVMLLNRSLTVRPGASNSHRGKGWEPITACAIEALVRRGGPLVAILWGSDARNLRPMLGQIPVVESPHPSPLSAYRGFFGSRPFSRANRLLVEQGGRAVDWALPME.

The active-site Proton acceptor is Asp71.

The protein belongs to the uracil-DNA glycosylase (UDG) superfamily. UNG family.

The protein localises to the cytoplasm. It carries out the reaction Hydrolyzes single-stranded DNA or mismatched double-stranded DNA and polynucleotides, releasing free uracil.. Excises uracil residues from the DNA which can arise as a result of misincorporation of dUMP residues by DNA polymerase or due to deamination of cytosine. The sequence is that of Uracil-DNA glycosylase from Nocardioides sp. (strain ATCC BAA-499 / JS614).